We begin with the raw amino-acid sequence, 413 residues long: Hemolin (413 aa).

The first 18 residues, 1-18 (MVSKSIVALAACVAMCVA), serve as a signal peptide directing secretion. 4 consecutive Ig-like C2-type domains span residues 25–112 (PVLK…HIIS), 121–215 (PTTF…LVGY), 233–322 (PMYV…VKLT), and 327–411 (PRFT…TLVI). Cystine bridges form between cysteine 46/cysteine 97, cysteine 141/cysteine 199, cysteine 252/cysteine 305, and cysteine 349/cysteine 395. Asparagine 283 carries N-linked (GlcNAc...) asparagine glycosylation.

The protein belongs to the hemolin family. Hemolymph.

The protein localises to the secreted. Functionally, insect-immune protein with antimicrobial activity. Forms a protein complex at the bacterial surface. Can inhibit hemocyte aggregation. The chain is Hemolin from Manduca sexta (Tobacco hawkmoth).